A 492-amino-acid chain; its full sequence is Differentially expressed in FDCP 8 homolog (492 aa).

Over residues 38–51 the composition is skewed to gly residues; the sequence is GLGGSGSTGSGSEA. The segment at 38-62 is disordered; the sequence is GLGGSGSTGSGSEAGGSEESGPQGA. 2 Phorbol-ester/DAG-type zinc fingers span residues 161 to 214 and 400 to 453; these read PHHG…KRVC and DHIR…NMIC. Positions 468–492 are disordered; the sequence is RMKSTEDDDDDDDGVATDDDVTAAE. Residues 473-492 are compositionally biased toward acidic residues; the sequence is EDDDDDDDGVATDDDVTAAE.

It belongs to the DEF8 family.

In Drosophila melanogaster (Fruit fly), this protein is Differentially expressed in FDCP 8 homolog.